Consider the following 90-residue polypeptide: Auxin-responsive protein SAUR24 (90 aa).

It belongs to the ARG7 family.

The protein resides in the cell membrane. In terms of biological role, functions as a positive effector of cell expansion through modulation of auxin transport. The protein is Auxin-responsive protein SAUR24 of Arabidopsis thaliana (Mouse-ear cress).